Here is a 438-residue protein sequence, read N- to C-terminus: DNA polymerase IV 1 (438 aa).

The UmuC domain occupies 46–226 (LAHIDCDAFY…KPVTMIWGVG (181 aa)). Residues aspartate 50 and aspartate 143 each contribute to the Mg(2+) site. The active site involves glutamate 144.

The protein belongs to the DNA polymerase type-Y family. In terms of assembly, monomer. Mg(2+) serves as cofactor.

It localises to the cytoplasm. The catalysed reaction is DNA(n) + a 2'-deoxyribonucleoside 5'-triphosphate = DNA(n+1) + diphosphate. Its function is as follows. Poorly processive, error-prone DNA polymerase involved in untargeted mutagenesis. Copies undamaged DNA at stalled replication forks, which arise in vivo from mismatched or misaligned primer ends. These misaligned primers can be extended by PolIV. Exhibits no 3'-5' exonuclease (proofreading) activity. May be involved in translesional synthesis, in conjunction with the beta clamp from PolIII. The protein is DNA polymerase IV 1 (dinB1) of Mesorhizobium japonicum (strain LMG 29417 / CECT 9101 / MAFF 303099) (Mesorhizobium loti (strain MAFF 303099)).